Here is a 132-residue protein sequence, read N- to C-terminus: Small ribosomal subunit protein uS8c (132 aa).

It belongs to the universal ribosomal protein uS8 family. Part of the 30S ribosomal subunit.

Its subcellular location is the plastid. It is found in the chloroplast. Its function is as follows. One of the primary rRNA binding proteins, it binds directly to 16S rRNA central domain where it helps coordinate assembly of the platform of the 30S subunit. This chain is Small ribosomal subunit protein uS8c (rps8), found in Zygnema circumcarinatum (Green alga).